A 323-amino-acid polypeptide reads, in one-letter code: Methionyl-tRNA formyltransferase (323 aa).

115–118 (SLLP) contributes to the (6S)-5,6,7,8-tetrahydrofolate binding site.

This sequence belongs to the Fmt family.

The catalysed reaction is L-methionyl-tRNA(fMet) + (6R)-10-formyltetrahydrofolate = N-formyl-L-methionyl-tRNA(fMet) + (6S)-5,6,7,8-tetrahydrofolate + H(+). Its function is as follows. Attaches a formyl group to the free amino group of methionyl-tRNA(fMet). The formyl group appears to play a dual role in the initiator identity of N-formylmethionyl-tRNA by promoting its recognition by IF2 and preventing the misappropriation of this tRNA by the elongation apparatus. The chain is Methionyl-tRNA formyltransferase from Lactococcus lactis subsp. cremoris (strain MG1363).